A 184-amino-acid chain; its full sequence is MLTPFCSSHHLQEKMNSCQSNPTKMDNSENVLFNDQNENFTLVAPHPSSSYLTRDQEHEIMVSALRQVISNSGADDASSSNLIITSVPPPDAGPCPLCGVAGCYGCTLQRPHREVKKEKKYKGVRKKPSGKWAAEIWDPRSKSRRWLGTFLTAEMAAQSYNDAAAEYRARRGKTNGEGIKRRWR.

The AP2/ERF DNA-binding region spans 120 to 177; that stretch reads KYKGVRKKPSGKWAAEIWDPRSKSRRWLGTFLTAEMAAQSYNDAAAEYRARRGKTNGE.

This sequence belongs to the AP2/ERF transcription factor family. ERF subfamily.

The protein localises to the nucleus. In terms of biological role, probably acts as a transcriptional activator. Binds to the GCC-box pathogenesis-related promoter element. May be involved in the regulation of gene expression by stress factors and by components of stress signal transduction pathways. This is Ethylene-responsive transcription factor ERF122 (ERF122) from Arabidopsis thaliana (Mouse-ear cress).